The primary structure comprises 113 residues: Large ribosomal subunit protein bL19 (113 aa).

Belongs to the bacterial ribosomal protein bL19 family.

This protein is located at the 30S-50S ribosomal subunit interface and may play a role in the structure and function of the aminoacyl-tRNA binding site. This is Large ribosomal subunit protein bL19 from Natranaerobius thermophilus (strain ATCC BAA-1301 / DSM 18059 / JW/NM-WN-LF).